The sequence spans 343 residues: Heat-inducible transcription repressor HrcA (343 aa).

The protein belongs to the HrcA family.

Negative regulator of class I heat shock genes (grpE-dnaK-dnaJ and groELS operons). Prevents heat-shock induction of these operons. This Alkaliphilus metalliredigens (strain QYMF) protein is Heat-inducible transcription repressor HrcA.